The chain runs to 490 residues: GTPase Der (490 aa).

Residues 3–166 (PVIALVGRPN…IALSEFPKDD (164 aa)) enclose the EngA-type G 1 domain. Residues 9–16 (GRPNVGKS), 56–60 (DTGGI), and 118–121 (NKVD) each bind GTP. Residues 164–191 (KDDADEPEEGEEEIVAEGEEAKRIPGPS) are disordered. The span at 166–181 (DADEPEEGEEEIVAEG) shows a compositional bias: acidic residues. The span at 182 to 191 (EEAKRIPGPS) shows a compositional bias: basic and acidic residues. An EngA-type G 2 domain is found at 196–369 (IKIAIIGRPN…SVQNSFKSAV (174 aa)). GTP is bound by residues 202 to 209 (GRPNVGKS), 249 to 253 (DTAGV), and 314 to 317 (NKWD). The KH-like domain maps to 370–454 (TRWPTSRLTQ…PIRIEFKGGE (85 aa)). Residues 452-490 (GGENPYEGNKNTLTDRQVNKKRRLMSHHKKADKKRRDKR) form a disordered region. A compositionally biased stretch (basic residues) spans 470–490 (NKKRRLMSHHKKADKKRRDKR).

The protein belongs to the TRAFAC class TrmE-Era-EngA-EngB-Septin-like GTPase superfamily. EngA (Der) GTPase family. As to quaternary structure, associates with the 50S ribosomal subunit.

In terms of biological role, GTPase that plays an essential role in the late steps of ribosome biogenesis. This Pseudomonas fluorescens (strain ATCC BAA-477 / NRRL B-23932 / Pf-5) protein is GTPase Der.